The sequence spans 96 residues: Large ribosomal subunit protein eL21 (96 aa).

Positions 1–37 (MPSSNGPMTGTRDKLSNSPRERGMSPPQRAIQEYDEG) are disordered. Basic and acidic residues predominate over residues 11-23 (TRDKLSNSPRERG).

Belongs to the eukaryotic ribosomal protein eL21 family.

The sequence is that of Large ribosomal subunit protein eL21 from Haloquadratum walsbyi (strain DSM 16790 / HBSQ001).